Here is a 2113-residue protein sequence, read N- to C-terminus: MDEVEEDQHEARLKELFDSFDTLGTGSLGQEELTDLCHVLCLEDVGPVLQQTLLQDNLLGRVHFDQFKEALILILSRTLSSEEHFEESDCSPEAQPKYVRGGKRYGRRSLPEFQESGEEIEEVTVLEPLEEEARSSPIPAGDCGEHWKTQRSEEYEAEGQLRFWNPDDLNASHGGSCPPPDWIEEKLQEVCEDLGITRDGHLNRKKLVSICEQYGLQNVDGAMLEEVFLSLDPDGTMSVEDFFYGLFKTGKSLTPSASTPYRQLKRHLSMQSFDESGRRTATSSAMTSTIGFRVFSCLDDGMGQASVERILDTWQEEGIENSQEILKALDFSLDGNINLTELTLALENELLVTKNGIHQAALASFKAEIRHLLERVDQVVREKEKLRSDLDKAEKLKSLMASEVDDHHAAIERRNEYNLRKLDEEYKERIAALKNELRQEREQMLQQVGKQRVELEQEIQKAKTEENYIRDRLALSLKENNRLETELLENAEKLAEYESLTQKLQRSLENVLAEKFGDLDPSSAEFFLQEERLAQMRNEYEQQCRLLQDQVDELQSELEEYQAQGRVLRLPLKNSLSEELDGHSGGIEPDQGPGSEECNPLNMSIEAELVIEQMKEQHHRDLCHLRLELEDKVRHYEKQLDDTRVASEQEQAAMKQKYEQGVHTLEKRVSELRSEIADLEGQAAVLREAHHKASCRHEEEKRQLQMAFDEEKAQLQEELRQEHERELQARLQQAAESFRQEREGLAQAAWTEEKVRGLEQSYQEQLLSLEEKHALEKEELREELSEHHRRELQEGREEMETECNRRVSQIEAQCQADCEKVTEHCEQTLQSLEVRHRQELRDLLDQHLEERSQWEFEKDELTQECTDAQEQLKEALQRERATAAAMKQEQEILERTYKDRLNILSTERKQLLQDLKDLQNASESQHGLLSGQILELKRSQERELRDQGQALCQTGVSEQLASQQLERLRVEHEQERREMTGKLAALESAHRASLERADQEKAEMSTEICRLQNTVKDMQQAASLLMLQGGCQATAGEEAEGDGAMSLLQQGEQLLEENGDVLISLQRAHEHAVKENAKMATEISRLQQRLKKLEPGSVISSCLEEGTSEISGSSREQVEPIMKQGPATKHFLSDLGDHEARDLASTGTSSVQRQECKTEASEASLDCFSELENSEDTRTESWDLKSQISQLREQLTVLRADCDRASERKQDLLFDISVLKKKLKMLERLPEASSRYKVLYEDAARENSCLQEELRLVETRYEESLDSNKELTAEVYRLQDEMKKMEEVMETFLSLEKSYDEVKVENEELRALVLRLQGKMEKVLGRAALQGDSYALWEAPSENLEVASDEKMLELRQTPKECTPKVVSMHHIIEECTQETQCCEQGSTKLLARIKAHEIAWFHRAIKTHPEKPSAQNRVIPEGSAALLGLQDKHLQQEATIAELELEKQKLQELTRNLRERVTALVRQKDAPSQGQKEEELKAMMQDLQITCGEMQRKVELLRYESEKLQEENSILRNEITTLNEEDSISNLKLEELNGSQEELWQKIETIEQEKASIQTMVEKLKKQVSDLKIKNQQLDSENIELSQKNSQNKEELKTLNQRLAEMLCQREEPGACTSEKWEQENASLKEELDHYKVQTSTLVSSLEAELSEVKLQTHVMEQENLLLKDELERLKQLHRCPDLSDFQQKMSSILSYNEKLLKEKEVLSEELKSCADKLAESSLLEHRIATMKQEQTAWEEQSESLKSQLAVSQAKVQNLEDVLQNVNLQMAEIESDLQVTRQEKEALKQEVMSLHRQLQNAIDKDWVSETAPHLSGLRGQQRRLSWDKLDHLMNEEPQLLCQESKRLQTVVQNTQADLTHSREKVRQLESNLLPTKHQKQLNQPCTVKSTEQEKLTLKRECEQSQKEQSPTSRKVGQMGSLERGLETIHLENEGLKKKQMQPLRSTVTRSPSSHWDLQLLQQQACPMVPREQFLQLQQQLLQAEKRSQHLQEELENRTSETNTPQGNQEHLVNLMEERMIEVEQKLKLVKRLLQEKVNQLKEQLCKNTKTDAVVKDLYVENAQLLKALEMTEQRQKTAEKRNFLLEEKIASLSTIVRNLAPAPLTSMPPLRS.

EF-hand domains follow at residues 8–43 (QHEARLKELFDSFDTLGTGSLGQEELTDLCHVLCLE) and 42–77 (LEDVGPVLQQTLLQDNLLGRVHFDQFKEALILILSR). The residue at position 152 (serine 152) is a Phosphoserine. EF-hand domains are found at residues 182-217 (WIEEKLQEVCEDLGITRDGHLNRKKLVSICEQYGLQ) and 219-252 (VDGAMLEEVFLSLDPDGTMSVEDFFYGLFKTGKS). 245 to 252 (GLFKTGKS) lines the GTP pocket. At serine 269 the chain carries Phosphoserine. Residue 300 to 304 (DGMGQ) coordinates GTP. Positions 317–352 (EGIENSQEILKALDFSLDGNINLTELTLALENELLV) constitute an EF-hand 5 domain. Residues 358 to 570 (HQAALASFKA…YQAQGRVLRL (213 aa)) adopt a coiled-coil conformation. A GTP-binding site is contributed by 420-423 (RKLD). The tract at residues 578 to 599 (EELDGHSGGIEPDQGPGSEECN) is disordered. Coiled coils occupy residues 620 to 926 (RDLC…ESQH), 958 to 1008 (EQLA…STEI), 1175 to 1323 (EDTR…MEKV), and 1425 to 1806 (AALL…IDKD). The interval 798–1495 (EMETECNRRV…QDLQITCGEM (698 aa)) is important for interaction with CEP170. Serine 1540 and serine 1826 each carry phosphoserine. Coiled-coil stretches lie at residues 1852 to 1910 (VQNT…KEQS) and 1971 to 2093 (REQF…IASL). Disordered stretches follow at residues 1899–1922 (KRECEQSQKEQSPTSRKVGQMGSL) and 1988–2008 (SQHLQEELENRTSETNTPQGN). The segment covering 1988–1999 (SQHLQEELENRT) has biased composition (basic and acidic residues).

Homooligomer. Interacts with GSK3B/GSK3-beta via its C-terminal domain. Interacts with C14ORF166, such interaction may prevent its phosphorylation by GSK3B. Interacts with AUNIP (via N-terminus). Identified in a complex with AUNIP and AURKA. Interacts with CCDC120. Interacts (via C-terminus) with CEP250. Interacts with CEP170. Interacts (via N-terminus) with the gamma-tubulin ring complex component TUBGCP3. Interacts with gamma-tubulin. Isoform 4 does not interact with CEP170 or CEP250. In terms of processing, phosphorylated by AURKA/Aurora kinase A and PKA kinases but not CK2 or AURKB/Aurora kinase B. As to expression, widely expressed. Highly expressed in spleen, bone marrow and skin. Weakly expressed in liver and small intestine. Expressed in brain.

The protein resides in the cytoplasm. It localises to the cytoskeleton. The protein localises to the microtubule organizing center. Its subcellular location is the centrosome. It is found in the centriole. In terms of biological role, centrosomal protein required for the positioning and anchorage of the microtubule minus-end in epithelial cells. May also act as a centrosome maturation factor. May play a role in microtubule nucleation, by recruiting the gamma-tubulin ring complex to the centrosome. Overexpression does not perturb nucleation or elongation of microtubules but suppresses release of microtubules. Required for centriole organization and microtubule anchoring at the mother centriole. The protein is Ninein of Mus musculus (Mouse).